The sequence spans 385 residues: Histidinol-phosphate aminotransferase (385 aa).

K235 carries the N6-(pyridoxal phosphate)lysine modification.

Belongs to the class-II pyridoxal-phosphate-dependent aminotransferase family. Histidinol-phosphate aminotransferase subfamily. Homodimer. Requires pyridoxal 5'-phosphate as cofactor.

The enzyme catalyses L-histidinol phosphate + 2-oxoglutarate = 3-(imidazol-4-yl)-2-oxopropyl phosphate + L-glutamate. The protein operates within amino-acid biosynthesis; L-histidine biosynthesis; L-histidine from 5-phospho-alpha-D-ribose 1-diphosphate: step 7/9. The protein is Histidinol-phosphate aminotransferase of Nocardia farcinica (strain IFM 10152).